A 574-amino-acid chain; its full sequence is Proline--tRNA ligase (574 aa).

The protein belongs to the class-II aminoacyl-tRNA synthetase family. ProS type 1 subfamily. Homodimer.

It is found in the cytoplasm. The catalysed reaction is tRNA(Pro) + L-proline + ATP = L-prolyl-tRNA(Pro) + AMP + diphosphate. In terms of biological role, catalyzes the attachment of proline to tRNA(Pro) in a two-step reaction: proline is first activated by ATP to form Pro-AMP and then transferred to the acceptor end of tRNA(Pro). As ProRS can inadvertently accommodate and process non-cognate amino acids such as alanine and cysteine, to avoid such errors it has two additional distinct editing activities against alanine. One activity is designated as 'pretransfer' editing and involves the tRNA(Pro)-independent hydrolysis of activated Ala-AMP. The other activity is designated 'posttransfer' editing and involves deacylation of mischarged Ala-tRNA(Pro). The misacylated Cys-tRNA(Pro) is not edited by ProRS. This chain is Proline--tRNA ligase, found in Marinomonas sp. (strain MWYL1).